We begin with the raw amino-acid sequence, 538 residues long: Tryptophan 7-halogenase PrnA (538 aa).

Residues Gly13, Thr15, Ala16, Ser39, Ile42, Ile45, Glu49, and Ala50 each contribute to the FAD site. Lys79 is an active-site residue. Lys79 contributes to the 7-chloro-L-tryptophan binding site. FAD is bound by residues Val187 and Leu337. A 7-chloro-L-tryptophan-binding site is contributed by Glu346. Glu346 is a binding site for L-tryptophan. Chloride is bound by residues Thr348 and Gly349. Ile350 provides a ligand contact to FAD. 4 residues coordinate 7-chloro-L-tryptophan: Tyr443, Tyr444, Glu450, and Phe454. The L-tryptophan site is built by Tyr443, Tyr444, Glu450, and Phe454.

Belongs to the flavin-dependent halogenase family. Bacterial tryptophan halogenase subfamily. As to quaternary structure, homodimer.

The enzyme catalyses L-tryptophan + FADH2 + chloride + O2 = 7-chloro-L-tryptophan + FAD + 2 H2O. Its pathway is antibiotic biosynthesis. Its function is as follows. Involved in the biosynthesis of the antifungal antibiotic pyrrolnitrin. Catalyzes the chlorination of tryptophan (Trp) at C7 position to yield 7-chloro-L-tryptophan (7-CLT). This Pseudomonas fluorescens protein is Tryptophan 7-halogenase PrnA.